The following is a 1074-amino-acid chain: Semaphorin-5A (1074 aa).

The N-terminal stretch at 1–22 (MKGACILAWLFSSLGVWRLARP) is a signal peptide. A Sema domain is found at 35–484 (HPVVSYKEIG…LQEHVVKIPL (450 aa)). 2 disulfide bridges follow: Cys104-Cys114 and Cys131-Cys140. 4 N-linked (GlcNAc...) asparagine glycosylation sites follow: Asn147, Asn168, Asn227, and Asn277. 2 disulfide bridges follow: Cys254/Cys357 and Cys278/Cys320. 2 N-linked (GlcNAc...) asparagine glycosylation sites follow: Asn323 and Asn367. The 48-residue stretch at 486–533 (RCHFHQTRGACIGAQDPYCGWDAVMKKCTSLEESLSMTQWDQSVPTCP) folds into the PSI domain. N-linked (GlcNAc...) asparagine glycans are attached at residues Asn536 and Asn591. TSP type-1 domains lie at 540–593 (DGSF…TNCS), 595–651 (NGGW…LLCP), and 653–702 (HVFW…NACP). Disulfide bonds link Cys607–Cys644, Cys611–Cys650, Cys622–Cys634, Cys665–Cys696, Cys669–Cys701, and Cys680–Cys686. Asn717 is a glycosylation site (N-linked (GlcNAc...) asparagine). TSP type-1 domains lie at 784–839 (NGAW…LPCP), 841–896 (DGVW…QTCP), and 897–944 (ENWS…VFDS). Disulfide bonds link Cys796–Cys833, Cys800–Cys838, Cys811–Cys823, Cys853–Cys890, Cys857–Cys895, and Cys868–Cys880. Asn898 and Asn933 each carry an N-linked (GlcNAc...) asparagine glycan. A helical membrane pass occupies residues 969–989 (FHMMAVGLSSSILGCLLTLLV). N-linked (GlcNAc...) asparagine glycosylation occurs at Asn1015.

Binds PLXNB3.

It localises to the membrane. Bifunctional axonal guidance cue regulated by sulfated proteoglycans; attractive effects result from interactions with heparan sulfate proteoglycans (HSPGs), while the inhibitory effects depend on interactions with chondroitin sulfate proteoglycans (CSPGs). Ligand for receptor PLXNB3. In glioma cells, SEMA5A stimulation of PLXNB3 results in the disassembly of F-actin stress fibers, disruption of focal adhesions and cellular collapse as well as inhibition of cell migration and invasion through ARHGDIA-mediated inactivation of RAC1. May promote angiogenesis by increasing endothelial cell proliferation and migration and inhibiting apoptosis. In Rattus norvegicus (Rat), this protein is Semaphorin-5A (Sema5a).